A 465-amino-acid polypeptide reads, in one-letter code: UDP-glucose:undecaprenyl-phosphate glucose-1-phosphate transferase (465 aa).

Transmembrane regions (helical) follow at residues 23–43, 46–66, 82–102, 105–125, and 280–300; these read FSDI…NDYF, LHYV…GGIT, ILIL…VTLF, FDLT…GFVV, and IIVS…IATA.

It belongs to the bacterial sugar transferase family.

It localises to the cell inner membrane. It carries out the reaction di-trans,octa-cis-undecaprenyl phosphate + UDP-alpha-D-glucose = alpha-D-glucosyl di-trans,octa-cis-undecaprenyl diphosphate + UMP. Its pathway is capsule biogenesis; capsule polysaccharide biosynthesis. Is likely the initiating enzyme for the K2 capsular polysaccharide synthesis. Catalyzes the transfer of the glucose-1-phosphate moiety from UDP-Glc onto the carrier lipid undecaprenyl phosphate (C55-P), forming a phosphoanhydride bond yielding to glucosyl-pyrophosphoryl-undecaprenol (Glc-PP-C55). The polypeptide is UDP-glucose:undecaprenyl-phosphate glucose-1-phosphate transferase (Klebsiella pneumoniae).